The primary structure comprises 684 residues: MKTNIINTWHSFVNIPNVIVPAIEKEIRRMENGACSSFSDDDNGSLSEESENEDSFFRSNSYKRRGPSQREQHLPGTMALFNVNNSSNKDQEPKEKKKKKKEKKSKADDKNENKKDPEKKKKKEKEKEKKKKEEKTKEKKEEEKKEVVVIDPSGNTYYNWLFCITLPVMYNWTMIIARACFDELQSDYLEYWLIFDYVSDVVYLADMFVRTRTGYLEQGLLVKDRMKLIEKYKANLQFKLDVLSVIPTDLLYIKFGWNYPEIRLNRLLRISRMFEFFQRTETRTNYPNIFRISNLVMYIVIIIHWNACVYYSISKAIGFGNDTWVYPDVNDPEFGRLARKYVYSLYWSTLTLTTIGETPPPVLDSEYIFVVVDFLIGVLIFATIVGNIGSMISNMNAARAEFQSRVDAIKQYMNFRNVSKDMEKRVIKWFDYLWTNKKTVDEREVLRYLPDKLRAEIAINVHLDTLKKVRIFADCEAGLLVELVLKLQPQVYSPGDYICKKGDIGREMYIIKEGKLAVVADDGITQFVVLSDGSYFGEISILNIKGSKAGNRRTANIKSIGYSDLFCLSKDDLMEALTEYPDAKTMLEEKGRQILMKDGLLDINIANMGSDPKDLEEKVTRMEGSVDLLQTRFARILAEYESMQQKLKQRLTKVEKFLKPLIETEFSALEEPGGESELTESLQD.

At 1–161 the chain is on the cytoplasmic side; that stretch reads MKTNIINTWH…PSGNTYYNWL (161 aa). Residues 34-145 are disordered; sequence ACSSFSDDDN…TKEKKEEEKK (112 aa). Acidic residues predominate over residues 39-54; the sequence is SDDDNGSLSEESENED. The span at 105–145 shows a compositional bias: basic and acidic residues; the sequence is SKADDKNENKKDPEKKKKKEKEKEKKKKEEKTKEKKEEEKK. The helical transmembrane segment at 162-183 threads the bilayer; that stretch reads FCITLPVMYNWTMIIARACFDE. Residues 184–193 lie on the Extracellular side of the membrane; the sequence is LQSDYLEYWL. The helical transmembrane segment at 194 to 214 threads the bilayer; the sequence is IFDYVSDVVYLADMFVRTRTG. Residues 215 to 239 are Cytoplasmic-facing; that stretch reads YLEQGLLVKDRMKLIEKYKANLQFK. The helical transmembrane segment at 240–258 threads the bilayer; sequence LDVLSVIPTDLLYIKFGWN. The Extracellular portion of the chain corresponds to 259–263; sequence YPEIR. A helical transmembrane segment spans residues 264–282; the sequence is LNRLLRISRMFEFFQRTET. Residues 283–289 lie on the Cytoplasmic side of the membrane; it reads RTNYPNI. Positions 287 to 395 are ion conduction pathway; the sequence is PNIFRISNLV…GNIGSMISNM (109 aa). The chain crosses the membrane as a helical span at residues 290–313; it reads FRISNLVMYIVIIIHWNACVYYSI. The Extracellular segment spans residues 314–336; it reads SKAIGFGNDTWVYPDVNDPEFGR. N321 is a glycosylation site (N-linked (GlcNAc...) asparagine). The next 2 helical transmembrane spans lie at 337-371 and 372-396; these read LARK…IFVV and VDFL…SNMN. The tract at residues 354–357 is selectivity filter; that stretch reads TIGE. The interval 397–473 is C-linker; the sequence is AARAEFQSRV…DTLKKVRIFA (77 aa). Residues 397–684 are Cytoplasmic-facing; that stretch reads AARAEFQSRV…ESELTESLQD (288 aa). Positions 477–597 are cyclic nucleotide-binding domain; sequence AGLLVELVLK…EEKGRQILMK (121 aa). The 3',5'-cyclic GMP site is built by G537, S540, R553, and T554. Positions 553 and 554 each coordinate 3',5'-cyclic AMP. The stretch at 615–669 forms a coiled coil; sequence LEEKVTRMEGSVDLLQTRFARILAEYESMQQKLKQRLTKVEKFLKPLIETEFSAL.

It belongs to the cyclic nucleotide-gated cation channel (TC 1.A.1.5) family. CNGA1 subfamily. As to quaternary structure, forms heterotetrameric channels composed of CNGA1 and CNGB1 subunits with 3:1 stoichiometry. May also form cyclic nucleotide-activated homotetrameric channels, that are efficiently activated by saturating cGMP, but poorly activated by saturating cAMP compared to the heterotetramer with CNGB1. The channel binds Ca(2+)-bound CALM1 via CaM1 and CaM2 regions of the CNGB1 subunit; this interaction modulates the affinity of the channel for cNMPs in response to intracellular Ca(2+) levels. As to expression, rod cells in the retina and inner medulla of kidney.

It localises to the cell membrane. The catalysed reaction is Ca(2+)(in) = Ca(2+)(out). It catalyses the reaction Na(+)(in) = Na(+)(out). The enzyme catalyses K(+)(in) = K(+)(out). It carries out the reaction NH4(+)(in) = NH4(+)(out). The catalysed reaction is Rb(+)(in) = Rb(+)(out). It catalyses the reaction Li(+)(in) = Li(+)(out). The enzyme catalyses Cs(+)(in) = Cs(+)(out). Its function is as follows. Pore-forming subunit of the rod cyclic nucleotide-gated channel. Mediates rod photoresponses at dim light converting transient changes in intracellular cGMP levels into electrical signals. In the dark, cGMP levels are high and keep the channel open enabling a steady inward current carried by Na(+) and Ca(2+) ions that leads to membrane depolarization and neurotransmitter release from synaptic terminals. Upon photon absorption cGMP levels decline leading to channel closure and membrane hyperpolarization that ultimately slows neurotransmitter release and signals the presence of light, the end point of the phototransduction cascade. Conducts cGMP- and cAMP-gated ion currents, with permeability for monovalent and divalent cations. The selectivity for Ca(2+) over Na(+) increases with cGMP concentrations, whereas the selectivity among monovalent ions is independent of the cGMP levels. This Mus musculus (Mouse) protein is Cyclic nucleotide-gated channel alpha-1 (Cnga1).